The following is a 586-amino-acid chain: CTP synthase 2 (586 aa).

The region spanning 300–554 is the Glutamine amidotransferase type-1 domain; sequence SIALVGKYTK…LAATGNLNAY (255 aa). Active-site for GATase activity residues include Cys-399, His-526, and Glu-528. The interval 563-586 is disordered; it reads SSDRYSDASDDSFSEPRIAELEIS. Ser-568, Ser-571, and Ser-574 each carry phosphoserine.

It belongs to the CTP synthase family.

It carries out the reaction UTP + L-glutamine + ATP + H2O = CTP + L-glutamate + ADP + phosphate + 2 H(+). It functions in the pathway pyrimidine metabolism; CTP biosynthesis via de novo pathway; CTP from UDP: step 2/2. Its function is as follows. Catalyzes the ATP-dependent amination of UTP to CTP with either L-glutamine or ammonia as the source of nitrogen. Constitutes the rate-limiting enzyme in the synthesis of cytosine nucleotides. In Homo sapiens (Human), this protein is CTP synthase 2 (CTPS2).